Here is a 608-residue protein sequence, read N- to C-terminus: Phosphogluconate dehydratase (608 aa).

[4Fe-4S] cluster-binding residues include Cys154 and Cys221.

It belongs to the IlvD/Edd family. The cofactor is [4Fe-4S] cluster.

The catalysed reaction is 6-phospho-D-gluconate = 2-dehydro-3-deoxy-6-phospho-D-gluconate + H2O. It functions in the pathway carbohydrate metabolism; Entner-Doudoroff pathway. Functionally, catalyzes the dehydration of 6-phospho-D-gluconate to 2-dehydro-3-deoxy-6-phospho-D-gluconate. This Helicobacter pylori (strain ATCC 700392 / 26695) (Campylobacter pylori) protein is Phosphogluconate dehydratase.